The sequence spans 257 residues: UPF0246 protein Sama_0917 (257 aa).

It belongs to the UPF0246 family.

The polypeptide is UPF0246 protein Sama_0917 (Shewanella amazonensis (strain ATCC BAA-1098 / SB2B)).